Consider the following 384-residue polypeptide: S-adenosylmethionine synthase (384 aa).

Position 15 (His15) interacts with ATP. Mg(2+) is bound at residue Asp17. Glu43 provides a ligand contact to K(+). L-methionine-binding residues include Glu56 and Gln99. The tract at residues 99–109 is flexible loop; sequence QSPDINQGVDR. Residues 164–166, 230–231, Asp239, 245–246, Ala262, and Lys266 each bind ATP; these read DAK, RF, and RK. Residue Asp239 participates in L-methionine binding. Position 270 (Lys270) interacts with L-methionine.

It belongs to the AdoMet synthase family. In terms of assembly, homotetramer; dimer of dimers. The cofactor is Mg(2+). Requires K(+) as cofactor.

It is found in the cytoplasm. The catalysed reaction is L-methionine + ATP + H2O = S-adenosyl-L-methionine + phosphate + diphosphate. Its pathway is amino-acid biosynthesis; S-adenosyl-L-methionine biosynthesis; S-adenosyl-L-methionine from L-methionine: step 1/1. Its function is as follows. Catalyzes the formation of S-adenosylmethionine (AdoMet) from methionine and ATP. The overall synthetic reaction is composed of two sequential steps, AdoMet formation and the subsequent tripolyphosphate hydrolysis which occurs prior to release of AdoMet from the enzyme. The chain is S-adenosylmethionine synthase from Edwardsiella ictaluri (strain 93-146).